The following is a 523-amino-acid chain: MSFKVNWKSLETDSLTSWTKDLLTSALNSGKSPNILASSISIKDLNFGKIAPNFEILEIGELGRDRFRGIFKINYEGDFHLTLHTNVQANPLNIYYSNSMEKEIDSQFVTPNFLLSNEQFALPLDLKLSDIKISGIGIIVFSKSKGLTLVFRNDPLDSIKVSSTFDTVQVLANFLQKQIETQIRDLFRETLPTLIHQFSLKYLSLDNNSDDLHAHFASSSRTHSSALDPDNEFNNFTYSSKNLQKNLQLFNTRETLDLHIPKFKGIIQRSHLEKFTQNYPSLLNSLYLNLHEIDMKSYNTYNNNTGSNGIPIDLLINDKNFNRTNRVLKEISDIQSNSFYKQSNNNKDTTVKPKRRRIKYSTRKKAASPTSTLINDDFHMASLHSSVASSMPMSMSSSLSDSEERPQLLAQPRPMRISPDFYQAFLKSTPEQCWYQCKRVGLGTNYFNFATSQPISTSPIKKDPARDFIKEKKSINYIDINKVNNKLKELSMDRSGKRKQRNYGSATYESENPIVAPPPPYSH.

The SMP-LTD domain occupies 1-200; the sequence is MSFKVNWKSL…LPTLIHQFSL (200 aa). The tract at residues 489-523 is disordered; that stretch reads ELSMDRSGKRKQRNYGSATYESENPIVAPPPPYSH.

Belongs to the MDM34 family. In terms of assembly, component of the ER-mitochondria encounter structure (ERMES) or MDM complex, composed of MMM1, MDM10, MDM12 and MDM34.

It localises to the mitochondrion outer membrane. Component of the ERMES/MDM complex, which serves as a molecular tether to connect the endoplasmic reticulum (ER) and mitochondria. Components of this complex are involved in the control of mitochondrial shape and protein biogenesis, and function in nonvesicular lipid trafficking between the ER and mitochondria. MDM34 is required for the interaction of the ER-resident membrane protein MMM1 and the outer mitochondrial membrane-resident beta-barrel protein MDM10. This Scheffersomyces stipitis (strain ATCC 58785 / CBS 6054 / NBRC 10063 / NRRL Y-11545) (Yeast) protein is Mitochondrial distribution and morphology protein 34.